The following is a 197-amino-acid chain: A-kinase anchor protein 14 (197 aa).

Composition is skewed to polar residues over residues 1–11 (MSETQNSTSQK) and 19–29 (AASQTMPNTQD). The tract at residues 1 to 29 (MSETQNSTSQKAMDEDNKAASQTMPNTQD) is disordered. Residues 35–52 (ELTQVALALVEDVINYAV) form an RII-binding region.

Binds to type II regulatory subunits (RII). Present in cilia (at protein level). Expressed in tissues containing axoneme-based organelles (cilia and/or flagella): trachea and testis. Highly expressed in airway cilia.

The protein resides in the cytoplasm. Binds to type II regulatory subunits of protein kinase A and anchors/targets them. The chain is A-kinase anchor protein 14 (AKAP14) from Homo sapiens (Human).